Reading from the N-terminus, the 128-residue chain is Cytochrome c-type biogenesis protein CcmE (128 aa).

Topologically, residues 1–8 (MQKRVRNR) are cytoplasmic. A helical; Signal-anchor for type II membrane protein transmembrane segment spans residues 9-29 (LITIIICFCSACLGISIILYN). Residues 30–128 (LEKNIVFFLP…KHDENYRPPQ (99 aa)) lie on the Periplasmic side of the membrane. 2 residues coordinate heme: histidine 120 and tyrosine 124.

It belongs to the CcmE/CycJ family.

It is found in the cell inner membrane. Heme chaperone required for the biogenesis of c-type cytochromes. Transiently binds heme delivered by CcmC and transfers the heme to apo-cytochromes in a process facilitated by CcmF and CcmH. The polypeptide is Cytochrome c-type biogenesis protein CcmE (Rickettsia conorii (strain ATCC VR-613 / Malish 7)).